A 528-amino-acid polypeptide reads, in one-letter code: Peptide chain release factor 3 (528 aa).

Residues 11-279 (SDRRTFAIIS…GFVEWAPAPI (269 aa)) enclose the tr-type G domain. Residues 20–27 (SHPDAGKT), 88–92 (DTPGH), and 142–145 (NKMD) each bind GTP.

Belongs to the TRAFAC class translation factor GTPase superfamily. Classic translation factor GTPase family. PrfC subfamily.

The protein localises to the cytoplasm. Increases the formation of ribosomal termination complexes and stimulates activities of RF-1 and RF-2. It binds guanine nucleotides and has strong preference for UGA stop codons. It may interact directly with the ribosome. The stimulation of RF-1 and RF-2 is significantly reduced by GTP and GDP, but not by GMP. In Marinomonas sp. (strain MWYL1), this protein is Peptide chain release factor 3.